Consider the following 86-residue polypeptide: Small ribosomal subunit protein bS20 (86 aa).

Over residues 1–27 (MANIKSAKKRAVQSEKRRQHNASRRSM) the composition is skewed to basic residues. Residues 1-28 (MANIKSAKKRAVQSEKRRQHNASRRSMM) form a disordered region.

This sequence belongs to the bacterial ribosomal protein bS20 family.

Binds directly to 16S ribosomal RNA. This chain is Small ribosomal subunit protein bS20, found in Proteus mirabilis (strain HI4320).